The sequence spans 600 residues: Rhesus-like glycoprotein B (600 aa).

At 1–16 (MSKDEHKLPLSKRKES) the chain is on the cytoplasmic side. A helical transmembrane segment spans residues 17-37 (IIFMMILFAFQVFMVVLFSVW). Residues 38 to 73 (VRYSKNEVNYSTLTPEQLQELEATGGVVQEEVTNIY) lie on the Extracellular side of the membrane. Asn-46 carries N-linked (GlcNAc...) asparagine glycosylation. Residues 74-94 (GYFRDINIMIFFGFGFLMTFL) traverse the membrane as a helical segment. Topologically, residues 95 to 102 (RRYGYSAL) are cytoplasmic. Residues 103 to 123 (GYTFIISALVAQWSVLIYGFF) form a helical membrane-spanning segment. Residues 124 to 145 (ETVDHKNDHGGDYASTFEMSQT) lie on the Extracellular side of the membrane. A helical membrane pass occupies residues 146–166 (VLLQGLFCAGAVMISYGAVLG). The Cytoplasmic portion of the chain corresponds to 167-170 (RVTP). The chain crosses the membrane as a helical span at residues 171–191 (LQMLVVGIFEPIFYFLNMFIG). The Extracellular segment spans residues 192–199 (EMNLEAID). A helical transmembrane segment spans residues 200–220 (VGGGMYIHLFGSVFGLTIAWF). The Cytoplasmic segment spans residues 221–240 (LTDKKSKDCEDNSPSYTGDY). Residues 241 to 261 (FAMAGTLFLWMMWPSFNAAIA) traverse the membrane as a helical segment. Over 262-274 (PLGEPQFRAIANT) the chain is Extracellular. A helical membrane pass occupies residues 275–295 (FLSLTASTIATFIVTRLFGHL). The Cytoplasmic segment spans residues 296–303 (GHKIDMVH). A helical transmembrane segment spans residues 304-323 (VQNSSLAGGVVQGCLAHMNI). The Extracellular segment spans residues 324–325 (NP). The chain crosses the membrane as a helical span at residues 326–346 (GGAIGMGFLAGVISVIGYLFI). Residues 347–361 (SPFLQRRFNIQDTCG) are Cytoplasmic-facing. A helical transmembrane segment spans residues 362–382 (IHNLHFMPGFIGSIAACIAAW). The Extracellular portion of the chain corresponds to 383 to 411 (KGLNDRSLYNPIEFNQIFRAGEDQARNNA). A helical transmembrane segment spans residues 412–432 (AATFISIGIAIAGGLFVGMIL). The Cytoplasmic portion of the chain corresponds to 433–600 (KALKKVGGLK…SSTNSPTSKV (168 aa)). Residues 471 to 600 (NLPMPTTDNG…SSTNSPTSKV (130 aa)) are disordered. Residues 498–510 (NKKENGYRRDLIR) show a composition bias toward basic and acidic residues. The span at 519 to 529 (EQSTDSSYSDS) shows a compositional bias: low complexity. The span at 540–554 (RIRKLAKKSYRRSKK) shows a compositional bias: basic residues. The span at 555–566 (SHSEHQPQHQPE) shows a compositional bias: basic and acidic residues. Residues 571 to 580 (NNNNNNNNNN) are compositionally biased toward low complexity. Positions 581–600 (ATAETTDNGGSSTNSPTSKV) are enriched in polar residues.

The protein belongs to the ammonium transporter (TC 2.A.49) family. Rh subfamily.

Its subcellular location is the membrane. May be a carbon dioxide/bicarbonate transporter. In Dictyostelium discoideum (Social amoeba), this protein is Rhesus-like glycoprotein B (rhgB).